We begin with the raw amino-acid sequence, 211 residues long: tRNA (guanine-N(7)-)-methyltransferase (211 aa).

Residues glutamate 43, aspartate 68, and asparagine 117 each coordinate S-adenosyl-L-methionine. Residues lysine 121, aspartate 153, and 190–193 contribute to the substrate site; that span reads TEYE.

The protein belongs to the class I-like SAM-binding methyltransferase superfamily. TrmB family.

The enzyme catalyses guanosine(46) in tRNA + S-adenosyl-L-methionine = N(7)-methylguanosine(46) in tRNA + S-adenosyl-L-homocysteine. It functions in the pathway tRNA modification; N(7)-methylguanine-tRNA biosynthesis. In terms of biological role, catalyzes the formation of N(7)-methylguanine at position 46 (m7G46) in tRNA. The sequence is that of tRNA (guanine-N(7)-)-methyltransferase from Clostridium acetobutylicum (strain ATCC 824 / DSM 792 / JCM 1419 / IAM 19013 / LMG 5710 / NBRC 13948 / NRRL B-527 / VKM B-1787 / 2291 / W).